The chain runs to 175 residues: Transcriptional repressor NrdR (175 aa).

Residues 3 to 34 (CPICQDTNSRVLESRSAESGKSIRRRRECMNC) fold into a zinc finger. The region spanning 49–139 (ITIIKRDGKK…VYRKFQGIRD (91 aa)) is the ATP-cone domain.

Belongs to the NrdR family. The cofactor is Zn(2+).

Functionally, negatively regulates transcription of bacterial ribonucleotide reductase nrd genes and operons by binding to NrdR-boxes. This chain is Transcriptional repressor NrdR, found in Trichodesmium erythraeum (strain IMS101).